The primary structure comprises 400 residues: Large envelope protein (400 aa).

Met-1 is subject to N-acetylmethionine. Disordered stretches follow at residues 1–24 and 89–116; these read MGGWSSKPRKGMGTNLSVPNPLGF and PAMPPPASTNRQSGRQPTPISPPLRDSH. Gly-2 carries N-myristoyl glycine; by host lipidation. Residues 2-119 are pre-S1; that stretch reads GGWSSKPRKG…PPLRDSHPQA (118 aa). Residues 2–174 are pre-S; the sequence is GGWSSKPRKG…SSRIGDPAPN (173 aa). The Virion surface; in external conformation segment spans residues 2-181; the sequence is GGWSSKPRKG…APNMENITSG (180 aa). At 2-253 the chain is on the intravirion; in internal conformation side; it reads GGWSSKPRKG…PGYRWMCLRR (252 aa). N-linked (GlcNAc...) asparagine glycosylation occurs at Trp-4. Residues 96-106 are compositionally biased toward polar residues; sequence STNRQSGRQPT. Residues 120-174 form a pre-S2 region; that stretch reads MQWNSTAFHQALQDPRVRGLYFPAGGSSSGTLNPVPTIASHISSISSRIGDPAPN. A helical transmembrane segment spans residues 182-202; it reads FLGPLLVLQAGFFLLTRILTI. Over 203–253 the chain is Intravirion; in external conformation; that stretch reads PQSLDSWWTSLNFLGGAPVCLGQNSQSPTSNHSPTSCPPICPGYRWMCLRR. Residues 254 to 274 traverse the membrane as a helical segment; it reads FIIFLFILLLCLIFLLVLLDY. Topologically, residues 275–348 are virion surface; that stretch reads QGMLPVCPLI…WASVRFSWLS (74 aa). Asn-320 carries N-linked (GlcNAc...) asparagine; by host glycosylation. A helical transmembrane segment spans residues 349-369; it reads LLVPFVQWFVGLSPTVWLSAI. At 370 to 375 the chain is on the intravirion side; sequence WMMWYW. A helical transmembrane segment spans residues 376–398; that stretch reads GPSLYNILSPFIPLLPIFFCLWV. Residues 399-400 are Virion surface-facing; that stretch reads YI.

It belongs to the orthohepadnavirus major surface antigen family. In its internal form (Li-HBsAg), interacts with the capsid protein and with the isoform S. Interacts with host chaperone CANX. As to quaternary structure, associates with host chaperone CANX through its pre-S2 N glycan; this association may be essential for isoform M proper secretion. In terms of assembly, interacts with isoform L. Interacts with the antigens of satellite virus HDV (HDVAgs); this interaction is required for encapsidation of HDV genomic RNA. Post-translationally, isoform M is N-terminally acetylated by host at a ratio of 90%, and N-glycosylated by host at the pre-S2 region. Myristoylated.

It is found in the virion membrane. The large envelope protein exists in two topological conformations, one which is termed 'external' or Le-HBsAg and the other 'internal' or Li-HBsAg. In its external conformation the protein attaches the virus to cell receptors and thereby initiating infection. This interaction determines the species specificity and liver tropism. This attachment induces virion internalization predominantly through caveolin-mediated endocytosis. The large envelope protein also assures fusion between virion membrane and endosomal membrane. In its internal conformation the protein plays a role in virion morphogenesis and mediates the contact with the nucleocapsid like a matrix protein. In terms of biological role, the middle envelope protein plays an important role in the budding of the virion. It is involved in the induction of budding in a nucleocapsid independent way. In this process the majority of envelope proteins bud to form subviral lipoprotein particles of 22 nm of diameter that do not contain a nucleocapsid. The protein is Large envelope protein of Hepatitis B virus genotype A1 subtype adw (isolate Philippines/pFDW294/1988) (HBV-A).